The sequence spans 205 residues: Ribosomal RNA small subunit methyltransferase G (205 aa).

Residues Gly-71, Phe-76, 120–121 (IE), and Arg-134 contribute to the S-adenosyl-L-methionine site.

This sequence belongs to the methyltransferase superfamily. RNA methyltransferase RsmG family.

It is found in the cytoplasm. The catalysed reaction is guanosine(527) in 16S rRNA + S-adenosyl-L-methionine = N(7)-methylguanosine(527) in 16S rRNA + S-adenosyl-L-homocysteine. Functionally, specifically methylates the N7 position of guanine in position 527 of 16S rRNA. This Paramagnetospirillum magneticum (strain ATCC 700264 / AMB-1) (Magnetospirillum magneticum) protein is Ribosomal RNA small subunit methyltransferase G.